A 414-amino-acid polypeptide reads, in one-letter code: Enterobactin exporter EntS (414 aa).

The Cytoplasmic portion of the chain corresponds to 1 to 21 (MNRQSWLLNLSLLKTHPAFRA). A helical transmembrane segment spans residues 22-42 (VFLARFISIVSLGLLGVAVPV). Residues 43 to 55 (QIQMMTHSTWQVG) are Periplasmic-facing. A helical transmembrane segment spans residues 56-76 (LSVTLTGGAMFIGLMVGGVLA). The Cytoplasmic segment spans residues 77–83 (DRYERKK). The helical transmembrane segment at 84–104 (VILLARGTCGIGFIGLCVNAL) threads the bilayer. At 105 to 109 (LPEPS) the chain is on the periplasmic side. Residues 110–130 (LLAIYLLGLWDGFFASLGVTA) form a helical membrane-spanning segment. Residues 131–156 (LLAATPALVGRENLMQAGAITMLTVR) lie on the Cytoplasmic side of the membrane. A helical transmembrane segment spans residues 157–177 (LGSVISPMLGGILLASGGVAW). Residue asparagine 178 is a topological domain, periplasmic. Residues 179-199 (YGLAAAGTFITLLPLLTLPRL) form a helical membrane-spanning segment. Residues 200-218 (PVPPQPRENPFLALLAAFR) are Cytoplasmic-facing. Residues 219–239 (FLLACPLIGGIALLGGLVTMA) form a helical membrane-spanning segment. The Periplasmic portion of the chain corresponds to 240 to 256 (SAVRVLYPALAMSWQMS). The helical transmembrane segment at 257 to 277 (AAQIGLLYAAIPLGAAIGALT) threads the bilayer. Residues 278–287 (SGQLAHSVRP) are Cytoplasmic-facing. A helical transmembrane segment spans residues 288–307 (GLIMLVSTVGSFLAVGLFAI). The Periplasmic portion of the chain corresponds to 308-313 (MPVWIA). A helical transmembrane segment spans residues 314 to 336 (GVICLALFGWLSAISSLLQYTLL). At 337 to 356 (QTQTPENMLGRMNGLWTAQN) the chain is on the cytoplasmic side. A helical transmembrane segment spans residues 357-377 (VTGDAIGAALLGGLGAMMTPV). Alanine 378 is a topological domain (periplasmic). The chain crosses the membrane as a helical span at residues 379–399 (SASVSGFGLVIIGLLLLLVLG). At 400 to 414 (ELRRFRQTSPVSDAG) the chain is on the cytoplasmic side.

It belongs to the major facilitator superfamily. EntS (TC 2.A.1.38) family.

The protein localises to the cell inner membrane. Its function is as follows. Component of an export pathway for enterobactin. This Salmonella paratyphi A (strain ATCC 9150 / SARB42) protein is Enterobactin exporter EntS.